We begin with the raw amino-acid sequence, 554 residues long: MLO-like protein 14 (554 aa).

Residues 1–13 are Extracellular-facing; that stretch reads MREETEPSERTLG. Residues 14 to 34 traverse the membrane as a helical segment; it reads LTPTWSVATVLTIFVFVSLIV. Residues 35–63 are Cytoplasmic-facing; sequence ERSIHRLSNWLQKTKRKPLFAALEKMKEE. Residues 64–84 form a helical membrane-spanning segment; that stretch reads LMLLGFISLLLTATSSTIANI. Topologically, residues 85–158 are extracellular; sequence CVSSSFHNDR…SYEGMEQLHR (74 aa). A helical transmembrane segment spans residues 159 to 179; the sequence is FIFIMAVTHVTYSCLTMLLAI. At 180–281 the chain is on the cytoplasmic side; it reads VKIHRWRIWE…MIRSMEEEFQ (102 aa). Residues 282–302 form a helical membrane-spanning segment; the sequence is KIVGVSGPLWGFVVGFMLFNI. Residue Lys303 is a topological domain, extracellular. Residues 304 to 324 traverse the membrane as a helical segment; the sequence is GSNLYFWLAIIPITLVLLVGA. Topologically, residues 325-366 are cytoplasmic; it reads KLQHVIATLALENASITEYASGIKLRPRDELFWFKKPELLLS. A helical membrane pass occupies residues 367 to 387; that stretch reads LIHFIQFQNAFELASFFWFWW. The Extracellular segment spans residues 388–406; sequence QFGYNSCFLRNHLLVYLRL. A helical membrane pass occupies residues 407–427; the sequence is ILGFSGQFLCSYSTLPLYALV. The Cytoplasmic portion of the chain corresponds to 428-554; it reads TQMGTNYKAA…SSSLPMRREC (127 aa). The segment at 441–462 is calmodulin-binding; that stretch reads QRVRETINGWGKATRRKRRHGL.

It belongs to the MLO family.

It is found in the membrane. In terms of biological role, may be involved in modulation of pathogen defense and leaf cell death. Activity seems to be regulated by Ca(2+)-dependent calmodulin binding and seems not to require heterotrimeric G proteins. This Arabidopsis thaliana (Mouse-ear cress) protein is MLO-like protein 14 (MLO14).